Consider the following 368-residue polypeptide: DNA replication and repair protein RecF (368 aa).

30-37 (GNNAQGKT) is an ATP binding site.

Belongs to the RecF family.

It localises to the cytoplasm. Functionally, the RecF protein is involved in DNA metabolism; it is required for DNA replication and normal SOS inducibility. RecF binds preferentially to single-stranded, linear DNA. It also seems to bind ATP. This is DNA replication and repair protein RecF from Streptococcus pyogenes serotype M4 (strain MGAS10750).